Consider the following 338-residue polypeptide: Ribosomal RNA small subunit methyltransferase C (338 aa).

It belongs to the methyltransferase superfamily. RsmC family. Monomer.

The protein localises to the cytoplasm. It carries out the reaction guanosine(1207) in 16S rRNA + S-adenosyl-L-methionine = N(2)-methylguanosine(1207) in 16S rRNA + S-adenosyl-L-homocysteine + H(+). Its function is as follows. Specifically methylates the guanine in position 1207 of 16S rRNA in the 30S particle. The polypeptide is Ribosomal RNA small subunit methyltransferase C (Buchnera aphidicola subsp. Acyrthosiphon pisum (strain APS) (Acyrthosiphon pisum symbiotic bacterium)).